We begin with the raw amino-acid sequence, 443 residues long: Glutamyl-tRNA reductase (443 aa).

Residues 49-52 (TCNR), Ser-109, 114-116 (ETQ), and Gln-120 each bind substrate. Cys-50 acts as the Nucleophile in catalysis. 189-194 (GAGKMS) is a binding site for NADP(+).

Belongs to the glutamyl-tRNA reductase family. As to quaternary structure, homodimer.

It catalyses the reaction (S)-4-amino-5-oxopentanoate + tRNA(Glu) + NADP(+) = L-glutamyl-tRNA(Glu) + NADPH + H(+). It participates in porphyrin-containing compound metabolism; protoporphyrin-IX biosynthesis; 5-aminolevulinate from L-glutamyl-tRNA(Glu): step 1/2. In terms of biological role, catalyzes the NADPH-dependent reduction of glutamyl-tRNA(Glu) to glutamate 1-semialdehyde (GSA). In Heliobacterium mobile (Heliobacillus mobilis), this protein is Glutamyl-tRNA reductase.